A 412-amino-acid polypeptide reads, in one-letter code: Putative competence-damage inducible protein (412 aa).

It belongs to the CinA family.

The protein is Putative competence-damage inducible protein of Bacillus anthracis.